Here is a 243-residue protein sequence, read N- to C-terminus: Ras-related protein Rab-12 (243 aa).

An N-acetylmethionine modification is found at Met-1. The tract at residues 1-36 (MDPSAALHRRPAGGSLGAVSPALSGGQARRRKQPPR) is disordered. Phosphoserine is present on residues Ser-15, Ser-20, and Ser-24. Positions 51, 52, 53, 54, 55, 72, and 73 each coordinate GTP. Thr-55 serves as a coordination point for Mg(2+). Short sequence motifs (switch) lie at residues 64 to 78 (DTFC…GVDF) and 96 to 113 (DTAG…YYRS). Residues Thr-73 and Asp-96 each contribute to the Mg(2+) site. GTP is bound at residue Gly-99. Position 105 is a phosphoserine; by LRRK2 (Ser-105). Residues Asn-154, Lys-155, Asp-157, Ser-185, Ala-186, and Lys-187 each contribute to the GTP site. Residues Cys-242 and Cys-243 are each lipidated (S-geranylgeranyl cysteine).

The protein belongs to the small GTPase superfamily. Rab family. As to quaternary structure, interacts with RABIF and OPTN. Interacts with LRRK2; interaction facilitates phosphorylation of Ser-105. Interacts with GDI1, GDI2, CHM and CHML; these interactions are disrupted by phosphorylation on Ser-105. Interacts with RILPL1 and RILPL2; these interactions are dependent on phosphorylation of Ser-105. The cofactor is Mg(2+). In terms of processing, phosphorylation of Ser-105 in the switch II region by LRRK2 prevents the association of RAB regulatory proteins, including CHM, CHML and RAB GDP dissociation inhibitors GDI1 and GDI2. As to expression, ubiquitously expressed.

Its subcellular location is the recycling endosome membrane. It localises to the lysosome membrane. The protein localises to the golgi apparatus membrane. The protein resides in the cytoplasmic vesicle. It is found in the autophagosome. It carries out the reaction GTP + H2O = GDP + phosphate + H(+). With respect to regulation, regulated by guanine nucleotide exchange factors (GEFs) including DENND3 which promote the exchange of bound GDP for free GTP. Regulated by GTPase activating proteins (GAPs) which increase the GTP hydrolysis activity. Inhibited by GDP dissociation inhibitors (GDIs). Functionally, the small GTPases Rab are key regulators of intracellular membrane trafficking, from the formation of transport vesicles to their fusion with membranes. Rabs cycle between an inactive GDP-bound form and an active GTP-bound form that is able to recruit to membranes different set of downstream effectors directly responsible for vesicle formation, movement, tethering and fusion. RAB12 may play a role in protein transport from recycling endosomes to lysosomes regulating, for instance, the degradation of the transferrin receptor. Involved in autophagy. This Mus musculus (Mouse) protein is Ras-related protein Rab-12.